We begin with the raw amino-acid sequence, 223 residues long: Oxaloacetate tautomerase FAHD1, mitochondrial (223 aa).

A mitochondrion-targeting transit peptide spans 1–30; sequence MATSMIQRMFKQGTKIVCVGRNYAAHAKEL. Glutamate 67, glutamate 69, and aspartate 98 together coordinate Mg(2+).

This sequence belongs to the FAH family. Mg(2+) is required as a cofactor. It depends on Mn(2+) as a cofactor.

The protein localises to the mitochondrion. It carries out the reaction oxaloacetate = enol-oxaloacetate. In terms of biological role, tautomerase that converts enol-oxaloacetate, a strong inhibitor of succinate dehydrogenase, to the physiological keto form of oxaloacetate. In Arabidopsis thaliana (Mouse-ear cress), this protein is Oxaloacetate tautomerase FAHD1, mitochondrial.